Consider the following 164-residue polypeptide: UPF0262 protein Xaut_1232 (164 aa).

It belongs to the UPF0262 family.

This Xanthobacter autotrophicus (strain ATCC BAA-1158 / Py2) protein is UPF0262 protein Xaut_1232.